The sequence spans 213 residues: Cytochrome c biogenesis ATP-binding export protein CcmA (213 aa).

An ABC transporter domain is found at 11-213; that stretch reads LTARNLECIR…TVTVHHLVLS (203 aa). 43-50 is an ATP binding site; that stretch reads GPNGSGKT.

The protein belongs to the ABC transporter superfamily. CcmA exporter (TC 3.A.1.107) family. The complex is composed of two ATP-binding proteins (CcmA) and two transmembrane proteins (CcmB).

The protein resides in the cell inner membrane. The enzyme catalyses heme b(in) + ATP + H2O = heme b(out) + ADP + phosphate + H(+). Its function is as follows. Part of the ABC transporter complex CcmAB involved in the biogenesis of c-type cytochromes; once thought to export heme, this seems not to be the case, but its exact role is uncertain. Responsible for energy coupling to the transport system. This Nitrosomonas europaea (strain ATCC 19718 / CIP 103999 / KCTC 2705 / NBRC 14298) protein is Cytochrome c biogenesis ATP-binding export protein CcmA.